The primary structure comprises 261 residues: Cell division protein DivIB (261 aa).

Residues 1 to 27 are Cytoplasmic-facing; sequence MEKGKVVVLEDRVPKLKERRRQKANRR. The helical transmembrane segment at 28 to 48 threads the bilayer; it reads LIAYLSFFFLFILCVLYFQSP. An alpha region spans residues 47 to 117; it reads SPLGAVGHVE…PNTIAIHVRE (71 aa). Over 49 to 261 the chain is Extracellular; it reads LGAVGHVEVS…KEDGDETTSP (213 aa). The POTRA domain maps to 50–118; that stretch reads GAVGHVEVSG…NTIAIHVREW (69 aa). Residues 118–230 form a beta region; it reads WRRIAYVYDR…YPAIAAALDR (113 aa). The segment at 231–260 is gamma; it reads NVKGVIHLEVGSYFVPYSPPKKEDGDETTS.

It belongs to the FtsQ/DivIB family. DivIB subfamily.

It is found in the cell membrane. Cell division protein that may be involved in stabilizing or promoting the assembly of the division complex. In Geobacillus kaustophilus (strain HTA426), this protein is Cell division protein DivIB.